A 498-amino-acid polypeptide reads, in one-letter code: MTKYVGAIDQGTTSTRFIVFDRKGQIFSVAQREHEQIYPRPGWVEHNAVEIWLNTRTVILEALEKKGLSTSDLAAVGVTNQRETALLWDRKTGEPLYNALVWQDTRTDQLVARYAKEGGQDRLRAKTGLPLATYFSGLKLHWILDNVPGARAKAEAGDALFGNIDTWLLWNLTGGPDGGIHITDVTNASRTQLMDLEKLAWDEDILKLFNIPAACLPRIVSSSERYGTGKGPLEGVTLSGILGDQQAALFGQACLHPGEAKNTYGTGNFMLMNTGEKPFPSTCGLITTVGYKLGDAKAVYALEGSIAITGALVQWLRDNLGIIKNSADIEPLARTVSDNGDVYFVPAFSGLYAPRWDDSARGVVCGLTRFANKGHIARAALEATAYQTREVLEAMVKDSKVAIRELRTDGGMVVNELLMQFQADMVNVPVVRPKVIETTALGAAYAAGLAVGYWASTDDITQNWGVDRRWHPHMAAEQREHLYGSWNKAVERSLGWAR.

Residue threonine 12 participates in ADP binding. 3 residues coordinate ATP: threonine 12, threonine 13, and serine 14. Threonine 12 contributes to the sn-glycerol 3-phosphate binding site. Arginine 16 lines the ADP pocket. Residues arginine 82, glutamate 83, tyrosine 134, and aspartate 244 each coordinate sn-glycerol 3-phosphate. Glycerol contacts are provided by arginine 82, glutamate 83, tyrosine 134, aspartate 244, and glutamine 245. ADP-binding residues include threonine 266 and glycine 310. Residues threonine 266, glycine 310, glutamine 314, and glycine 411 each contribute to the ATP site. Positions 411 and 415 each coordinate ADP.

It belongs to the FGGY kinase family.

The catalysed reaction is glycerol + ATP = sn-glycerol 3-phosphate + ADP + H(+). It participates in polyol metabolism; glycerol degradation via glycerol kinase pathway; sn-glycerol 3-phosphate from glycerol: step 1/1. Its activity is regulated as follows. Inhibited by fructose 1,6-bisphosphate (FBP). In terms of biological role, key enzyme in the regulation of glycerol uptake and metabolism. Catalyzes the phosphorylation of glycerol to yield sn-glycerol 3-phosphate. The chain is Glycerol kinase from Azorhizobium caulinodans (strain ATCC 43989 / DSM 5975 / JCM 20966 / LMG 6465 / NBRC 14845 / NCIMB 13405 / ORS 571).